We begin with the raw amino-acid sequence, 349 residues long: Protein-glutamate methylesterase/protein-glutamine glutaminase (349 aa).

One can recognise a Response regulatory domain in the interval 2 to 118 (RVLVVDDSAL…VDLSSVAQEL (117 aa)). Asp52 bears the 4-aspartylphosphate mark. Residues 159–345 (VLIGSSTGGP…EEIVRFLEVK (187 aa)) enclose the CheB-type methylesterase domain. Residues Ser164, His191, and Asp287 contribute to the active site.

This sequence belongs to the CheB family. In terms of processing, phosphorylated by CheA. Phosphorylation of the N-terminal regulatory domain activates the methylesterase activity.

The protein resides in the cytoplasm. The catalysed reaction is [protein]-L-glutamate 5-O-methyl ester + H2O = L-glutamyl-[protein] + methanol + H(+). The enzyme catalyses L-glutaminyl-[protein] + H2O = L-glutamyl-[protein] + NH4(+). Functionally, involved in chemotaxis. Part of a chemotaxis signal transduction system that modulates chemotaxis in response to various stimuli. Catalyzes the demethylation of specific methylglutamate residues introduced into the chemoreceptors (methyl-accepting chemotaxis proteins or MCP) by CheR. Also mediates the irreversible deamidation of specific glutamine residues to glutamic acid. This is Protein-glutamate methylesterase/protein-glutamine glutaminase from Archaeoglobus fulgidus (strain ATCC 49558 / DSM 4304 / JCM 9628 / NBRC 100126 / VC-16).